A 266-amino-acid chain; its full sequence is Chymotrypsin-like elastase family member 1 (266 aa).

A signal peptide spans 1–16 (MLRFLVLATLVLYGHS). The propeptide at 17–26 (TRDFPETNAR) is activation peptide. The region spanning 27 to 264 (VVGGTEARKN…YISWINNVIA (238 aa)) is the Peptidase S1 domain. Cys-56 and Cys-72 are disulfide-bonded. The Charge relay system role is filled by His-71. Glu-85, Asn-87, Gln-90, and Glu-95 together coordinate Ca(2+). N-linked (GlcNAc...) asparagine glycosylation occurs at Asn-87. Residue Asp-119 is the Charge relay system of the active site. 3 disulfides stabilise this stretch: Cys-153-Cys-220, Cys-184-Cys-200, and Cys-210-Cys-240. Ser-214 (charge relay system) is an active-site residue. Asn-241 is a glycosylation site (N-linked (GlcNAc...) asparagine).

This sequence belongs to the peptidase S1 family. Elastase subfamily. The cofactor is Ca(2+).

The protein resides in the secreted. The enzyme catalyses Hydrolysis of proteins, including elastin. Preferential cleavage: Ala-|-Xaa.. In terms of biological role, serine proteases that hydrolyze many proteins in addition to elastin. In Felis catus (Cat), this protein is Chymotrypsin-like elastase family member 1 (CELA1).